The following is a 297-amino-acid chain: Adrenocorticotropic hormone receptor (297 aa).

Topologically, residues 1–23 are extracellular; it reads MKHIITPYEHTNDTARNNSDCPD. 2 N-linked (GlcNAc...) asparagine glycosylation sites follow: N12 and N17. Cystine bridges form between C21/C253 and C245/C251. Residues 24 to 49 traverse the membrane as a helical segment; it reads VVLPEEIFFTISIIGVLENLIVLLAV. Residues 50-58 lie on the Cytoplasmic side of the membrane; it reads VKNKNLQCP. The chain crosses the membrane as a helical span at residues 59 to 79; it reads MYFFICSLAISDMLGSLYKIL. Topologically, residues 80-104 are extracellular; it reads ENILIMFRNRGYLQPRGNFESTADD. The chain crosses the membrane as a helical span at residues 105 to 126; that stretch reads IIDCMFILSLLGSIFSLSVIAA. At 127–147 the chain is on the cytoplasmic side; that stretch reads DRYITIFHALQYHSIVTMRRT. A helical membrane pass occupies residues 148 to 168; the sequence is IITLTVIWIFCTGSGIAMVIF. The Extracellular portion of the chain corresponds to 169–180; the sequence is SHHVPTVLTFTS. The chain crosses the membrane as a helical span at residues 181–199; the sequence is LFPLMLVFILCLYIHMFLL. At 200–217 the chain is on the cytoplasmic side; that stretch reads ARSHARKISTLPRANMKG. Residues 218-244 form a helical membrane-spanning segment; the sequence is AITLTILLGVFIFCWAPFILHVLLMTF. Over 245 to 256 the chain is Extracellular; the sequence is CPNNPYCVCYMS. A helical membrane pass occupies residues 257–278; the sequence is LFQINGMLIMCNAVIDPFIYAF. The Cytoplasmic portion of the chain corresponds to 279–297; sequence RSPELRDAFKKMFSCHRYQ. A lipid anchor (S-palmitoyl cysteine) is attached at C293.

Belongs to the G-protein coupled receptor 1 family. Homodimer. Interacts with corticotropin (ACTH). Interacts with MRAP; this interaction targets MC2R to the plasma membrane. Interacts with MRAP2; competing with MRAP for binding to MC2R and impairing the binding of corticotropin (ACTH). Post-translationally, ubiquitinated by MGRN1 that may be involved in post-endocytic trafficking and/or degradation of internalized receptor.

The protein resides in the cell membrane. In terms of biological role, hormone receptor primarily expressed in adrenal cortex that plays a key role in regulating adrenocortical function. Upon corticotropin (ACTH) binding, facilitates the release of adrenal glucocorticoids, including cortisol and corticosterone. In addition, MC2R is required for fetal and neonatal adrenal gland development. Mechanistically, activates adenylate cyclase (cAMP), the MAPK cascade as well as the cAMP-dependent protein kinase A pathway leading to steroidogenic factor 1/NR5A1-mediated transcriptional activation. In Mesocricetus auratus (Golden hamster), this protein is Adrenocorticotropic hormone receptor (MC2R).